A 399-amino-acid chain; its full sequence is Acetate kinase (399 aa).

A Mg(2+)-binding site is contributed by Asn-7. Position 14 (Lys-14) interacts with ATP. Position 89 (Arg-89) interacts with substrate. Asp-146 serves as the catalytic Proton donor/acceptor. Residues 206–210 (HIGSG), 280–282 (DFR), and 328–332 (GIGEN) each bind ATP. Residue Glu-382 coordinates Mg(2+).

It belongs to the acetokinase family. As to quaternary structure, homodimer. The cofactor is Mg(2+). Requires Mn(2+) as cofactor.

It localises to the cytoplasm. It catalyses the reaction acetate + ATP = acetyl phosphate + ADP. Its pathway is metabolic intermediate biosynthesis; acetyl-CoA biosynthesis; acetyl-CoA from acetate: step 1/2. Its function is as follows. Catalyzes the formation of acetyl phosphate from acetate and ATP. Can also catalyze the reverse reaction. In Campylobacter hominis (strain ATCC BAA-381 / DSM 21671 / CCUG 45161 / LMG 19568 / NCTC 13146 / CH001A), this protein is Acetate kinase.